Consider the following 368-residue polypeptide: uncharacterized protein (368 aa).

5 helical membrane-spanning segments follow: residues 22–42 (VAGI…FTLI), 74–94 (FVKP…LLVL), 104–124 (FLKT…LNLF), 144–164 (VGDF…GASL), and 168–188 (WGVN…AVSL).

This sequence belongs to the MscS (TC 1.A.23) family.

It is found in the cell membrane. This is an uncharacterized protein from Aquifex aeolicus (strain VF5).